Reading from the N-terminus, the 184-residue chain is Inosine triphosphate pyrophosphatase (184 aa).

ITP is bound at residue 10 to 15; sequence TGNANK. Residue glutamate 38 coordinates Mg(2+). ITP contacts are provided by residues lysine 50, 66–67, lysine 83, 142–145, lysine 163, and 168–169; these read DT, FGWD, and HR.

This sequence belongs to the HAM1 NTPase family. Homodimer. Mg(2+) is required as a cofactor. Mn(2+) serves as cofactor.

Its subcellular location is the cytoplasm. The protein localises to the nucleus. It catalyses the reaction ITP + H2O = IMP + diphosphate + H(+). The enzyme catalyses dITP + H2O = dIMP + diphosphate + H(+). It carries out the reaction XTP + H2O = XMP + diphosphate + H(+). Functionally, pyrophosphatase that hydrolyzes non-canonical purine nucleotides such as inosine triphosphate (ITP), deoxyinosine triphosphate (dITP) or xanthosine 5'-triphosphate (XTP) to their respective monophosphate derivatives. The enzyme does not distinguish between the deoxy- and ribose forms. Probably excludes non-canonical purines from RNA and DNA precursor pools, thus preventing their incorporation into RNA and DNA and avoiding chromosomal lesions. This is Inosine triphosphate pyrophosphatase from Fusarium vanettenii (strain ATCC MYA-4622 / CBS 123669 / FGSC 9596 / NRRL 45880 / 77-13-4) (Fusarium solani subsp. pisi).